The sequence spans 648 residues: Adhesion G-protein coupled receptor G1 (648 aa).

An N-terminal signal peptide occupies residues 1–24 (MKQNPAKTARMWIIICLLFVLGQA). Topologically, residues 25-370 (TDNDRDFKMC…STVRHLKALT (346 aa)) are extracellular. Residues Cys34 and Cys96 are joined by a disulfide bond. N-linked (GlcNAc...) asparagine glycosylation is found at Asn62, Asn91, Asn114, Asn146, Asn222, Asn262, and Asn286. A disulfide bond links Cys127 and Cys176. One can recognise a GAIN-B domain in the interval 214–361 (MDEEFTGHNF…AILVQVEQKS (148 aa)). 2 disulfide bridges follow: Cys313-Cys343 and Cys331-Cys345. Positions 313-361 (CVSWDTKQDNEVNWKDDGCDTVKINEEQTECHCNHLTYFAILVQVEQKS) are GPS. A stachel region spans residues 349–361 (TYFAILVQVEQKS). A helical membrane pass occupies residues 371 to 391 (FITAVGCAVSLVSCLVLFYWL). Over 392–408 (CKRRRGKKNQISLVHRG) the chain is Cytoplasmic. A helical transmembrane segment spans residues 409-429 (LVVAIFLLCLFFILTGILANV). Topologically, residues 430-443 (ANETVCQLTGSLLH) are extracellular. N-linked (GlcNAc...) asparagine glycosylation occurs at Asn431. A helical membrane pass occupies residues 444 to 464 (YGLLSTLCWMAMEVFHTFLLV). Over 465–471 (RKVFNSP) the chain is Cytoplasmic. Residues 472-492 (LPIWIFYLMGFGFPFLLVSIL) form a helical membrane-spanning segment. Residues 493-530 (LSVGDIYGERKIKPSDDVNNPYRMCWMTEGDKSQLAHY) lie on the Extracellular side of the membrane. The chain crosses the membrane as a helical span at residues 531–551 (IINIGLLAVVVSSGLVMLFLV). Over 552 to 563 (VREIRNRPDWKK) the chain is Cytoplasmic. A helical membrane pass occupies residues 564–586 (IHVAFLSIWGLTCLYGTTWALGF). Residues 587–595 (LDFGPFSEV) lie on the Extracellular side of the membrane. The helical transmembrane segment at 596 to 618 (TLFLFCIINSLQGFFLMLRYYAL) threads the bilayer. Residues 619 to 648 (ERMKKKDVSSSDGSSSGSSKQHMLQTNEKS) lie on the Cytoplasmic side of the membrane.

It belongs to the G-protein coupled receptor 2 family. LN-TM7 subfamily. In terms of assembly, heterodimer of 2 chains generated by proteolytic processing; the large extracellular N-terminal fragment (ADGRG1 NT) and the membrane-bound C-terminal fragment (ADGRG1-CT) predominantly remain associated and non-covalently linked. In terms of processing, autoproteolytically cleaved into 2 fragments; the large extracellular N-terminal fragment (ADGRG1 NT) and the membrane-bound C-terminal fragment (ADGRG1 CT) predominantly remain associated and non-covalently linked.

Its subcellular location is the cell membrane. With respect to regulation, forms a heterodimer of 2 chains generated by proteolytic processing that remain associated through non-covalent interactions mediated by the GAIN-B domain. In the inactivated receptor, the Stachel sequence (also named stalk) is embedded in the GAIN-B domain, where it adopts a beta-strand conformation. On activation, the Stachel moves into the 7 transmembrane region and adopts a twisted hook-shaped configuration that forms contacts within the receptor, leading to coupling of a G-alpha protein, which activates signaling. The cleaved GAIN-B and N-terminal domains can then dissociate from the rest of the receptor. Its function is as follows. Adhesion G-protein coupled receptor (aGPCR), which is involved in oligodendrocyte development and maintenance of peripheral myelin. Ligand binding causes a conformation change that triggers signaling via guanine nucleotide-binding proteins (G proteins) and modulates the activity of downstream effectors, such as RhoA pathway. Adgrg1 is coupled to G(12) and/or G(13) G proteins (gna12 and gna13, respectively) and mediates the activation Rho small GTPases. Adgrg1-dependent RhoA signaling promotes timely radial sorting of axons. Required to establish proper myelin thickness and facilitate organization of the myelin sheath in the mature peripheral nervous system. This Danio rerio (Zebrafish) protein is Adhesion G-protein coupled receptor G1.